A 549-amino-acid polypeptide reads, in one-letter code: Myotubularin-related protein 9 (549 aa).

Methionine 1 is subject to N-acetylmethionine. The GRAM domain occupies 4-99; sequence AELIKTPRVD…LNIASSIEAL (96 aa). A Myotubularin phosphatase domain is found at 123–498; that stretch reads GWHSFLPEQE…QSLQLWEGIF (376 aa). Residues 508–542 are a coiled coil; sequence LDEAYEEMVNIIEYNKELQAKVNLLRRQLAELETE. Serine 548 is modified (phosphoserine).

It belongs to the protein-tyrosine phosphatase family. Non-receptor class myotubularin subfamily. In terms of assembly, homodimer. Heterodimer (via C-terminus) with lipid phosphatase MTMR6 (via C-terminus). Heterodimer (via coiled coil domain) with lipid phosphatase MTMR7 (via C-terminus). Heterodimer with lipid phosphatase MTMR8.

The protein localises to the cytoplasm. It is found in the cell projection. The protein resides in the ruffle membrane. Its subcellular location is the perinuclear region. It localises to the endoplasmic reticulum. In terms of biological role, acts as an adapter for myotubularin-related phosphatases. Increases lipid phosphatase MTMR6 catalytic activity, specifically towards phosphatidylinositol 3,5-bisphosphate, and MTMR6 binding affinity for phosphorylated phosphatidylinositols. Positively regulates lipid phosphatase MTMR7 catalytic activity. Increases MTMR8 catalytic activity towards phosphatidylinositol 3-phosphate. The formation of the MTMR6-MTMR9 complex, stabilizes both MTMR6 and MTMR9 protein levels. Stabilizes MTMR8 protein levels. Plays a role in the late stages of macropinocytosis possibly by regulating MTMR6-mediated dephosphorylation of phosphatidylinositol 3-phosphate in membrane ruffles. Negatively regulates autophagy, in part via its association with MTMR8. Negatively regulates DNA damage-induced apoptosis, in part via its association with MTMR6. Does not bind mono-, di- and tri-phosphorylated phosphatidylinositols, phosphatidic acid and phosphatidylserine. This chain is Myotubularin-related protein 9 (MTMR9), found in Bos taurus (Bovine).